A 121-amino-acid chain; its full sequence is Mitochondrial intermembrane space cysteine motif-containing protein MIX14 (121 aa).

CHCH domains follow at residues valine 14 to valine 56 and methionine 60 to lysine 105. Short sequence motifs (cx9C motif) lie at residues cysteine 17–cysteine 27, cysteine 38–cysteine 48, cysteine 63–cysteine 73, and cysteine 87–cysteine 97. 4 disulfide bridges follow: cysteine 17–cysteine 48, cysteine 27–cysteine 38, cysteine 63–cysteine 97, and cysteine 73–cysteine 87.

The protein localises to the mitochondrion intermembrane space. The polypeptide is Mitochondrial intermembrane space cysteine motif-containing protein MIX14 (MIX14) (Saccharomyces cerevisiae (strain ATCC 204508 / S288c) (Baker's yeast)).